We begin with the raw amino-acid sequence, 292 residues long: tRNA (guanine-N(1)-)-methyltransferase (292 aa).

S-adenosyl-L-methionine-binding positions include Gly-151 and 175–180; that span reads IGDYVL.

This sequence belongs to the RNA methyltransferase TrmD family. Homodimer.

The protein resides in the cytoplasm. It catalyses the reaction guanosine(37) in tRNA + S-adenosyl-L-methionine = N(1)-methylguanosine(37) in tRNA + S-adenosyl-L-homocysteine + H(+). Specifically methylates guanosine-37 in various tRNAs. This chain is tRNA (guanine-N(1)-)-methyltransferase, found in Corynebacterium diphtheriae (strain ATCC 700971 / NCTC 13129 / Biotype gravis).